Consider the following 526-residue polypeptide: Bifunctional purine biosynthesis protein PurH (526 aa).

In terms of domain architecture, MGS-like spans 1 to 147 (MPSIKRALIS…KNWKHVAIVT (147 aa)).

It belongs to the PurH family.

It catalyses the reaction (6R)-10-formyltetrahydrofolate + 5-amino-1-(5-phospho-beta-D-ribosyl)imidazole-4-carboxamide = 5-formamido-1-(5-phospho-D-ribosyl)imidazole-4-carboxamide + (6S)-5,6,7,8-tetrahydrofolate. It carries out the reaction IMP + H2O = 5-formamido-1-(5-phospho-D-ribosyl)imidazole-4-carboxamide. It participates in purine metabolism; IMP biosynthesis via de novo pathway; 5-formamido-1-(5-phospho-D-ribosyl)imidazole-4-carboxamide from 5-amino-1-(5-phospho-D-ribosyl)imidazole-4-carboxamide (10-formyl THF route): step 1/1. The protein operates within purine metabolism; IMP biosynthesis via de novo pathway; IMP from 5-formamido-1-(5-phospho-D-ribosyl)imidazole-4-carboxamide: step 1/1. This chain is Bifunctional purine biosynthesis protein PurH, found in Neisseria meningitidis serogroup C / serotype 2a (strain ATCC 700532 / DSM 15464 / FAM18).